The chain runs to 654 residues: ATP-dependent rRNA helicase spb-4 (654 aa).

Positions 17–45 (WDALTPPLAQWILDYLSSMGFTQPTPVQK) match the Q motif motif. Residues 48 to 249 (LELFRGNKDV…TVGLLYPHKI (202 aa)) enclose the Helicase ATP-binding domain. Residue 61–68 (AVTGSGKT) coordinates ATP. A DEAD box motif is present at residues 197–200 (DEAD). Positions 286-444 (AIVQLLEKLE…VTPDEVERVS (159 aa)) constitute a Helicase C-terminal domain. The stretch at 531 to 631 (REKKRQEELA…EERAAALAAN (101 aa)) forms a coiled coil. Basic and acidic residues predominate over residues 542-577 (WKEEKAKRAQEENTGDKRKKNEAWSGKAEQEETKLQ). A disordered region spans residues 542-654 (WKEEKAKRAQ…SDEEFGGFDD (113 aa)). A compositionally biased stretch (basic residues) spans 578–588 (RREKKRRKREA). A compositionally biased stretch (basic and acidic residues) spans 589–625 (KKFSEMTEKEKEEHLKLEQMIEEVRKRNEAKAAEERA). The segment covering 644–654 (DSDEEFGGFDD) has biased composition (acidic residues).

The protein belongs to the DEAD box helicase family. DDX55/SPB4 subfamily. Component of pre-60S ribosomal complexes.

Its subcellular location is the nucleus. It localises to the nucleolus. It carries out the reaction ATP + H2O = ADP + phosphate + H(+). Functionally, ATP-binding RNA helicase involved in the biogenesis of 60S ribosomal subunits. Binds 90S pre-ribosomal particles and dissociates from pre-60S ribosomal particles after processing of 27SB pre-rRNA. Required for the normal formation of 18S rRNA through the processing of pre-rRNAs at sites A0, A1 and A2, and the normal formation of 25S and 5.8S rRNAs through the processing of pre-rRNAs at sites C1 and C2. The polypeptide is ATP-dependent rRNA helicase spb-4 (Neurospora crassa (strain ATCC 24698 / 74-OR23-1A / CBS 708.71 / DSM 1257 / FGSC 987)).